The chain runs to 185 residues: METSLRLRGGGSRPQSKSQEGLRIHAKEKLPIASNALLQAHGEIHAATGAPTYLALLFRNFYPRLSANLGLGLAIHFRNNQPLPLAWDNFSYTLRASKAIIPFPSNALLGINLKGRLLADKYFNPTTRTAAVELAWTILDLKRGQDVRLKLGYQLLHKMPYFQLRENNWTFNAYMDGKWDVRFDL.

The interval 1–22 (METSLRLRGGGSRPQSKSQEGL) is disordered. At 1-29 (METSLRLRGGGSRPQSKSQEGLRIHAKEK) the chain is on the cytoplasmic side. A beta stranded transmembrane segment spans residues 30 to 39 (LPIASNALLQ). The Chloroplast intermembrane segment spans residues 40 to 63 (AHGEIHAATGAPTYLALLFRNFYP). The chain crosses the membrane as a beta stranded span at residues 64-73 (RLSANLGLGL). Residues 74–88 (AIHFRNNQPLPLAWD) lie on the Cytoplasmic side of the membrane. A beta stranded transmembrane segment spans residues 89–98 (NFSYTLRASK). Over 99-105 (AIIPFPS) the chain is Chloroplast intermembrane. The beta stranded transmembrane segment at 106-115 (NALLGINLKG) threads the bilayer. At 116–128 (RLLADKYFNPTTR) the chain is on the cytoplasmic side. Residues 129 to 138 (TAAVELAWTI) form a beta stranded membrane-spanning segment. The Chloroplast intermembrane portion of the chain corresponds to 139–145 (LDLKRGQ). The beta stranded transmembrane segment at 146 to 155 (DVRLKLGYQL) threads the bilayer. The Cytoplasmic segment spans residues 156 to 160 (LHKMP). Residues 161–170 (YFQLRENNWT) form a beta stranded membrane-spanning segment. The Chloroplast intermembrane portion of the chain corresponds to 171–176 (FNAYMD). Residues 177-185 (GKWDVRFDL) form a beta stranded membrane-spanning segment.

Belongs to the plastid outer envelope porin OEP21 (TC 1.B.29) family.

The protein resides in the plastid. Its subcellular location is the etioplast membrane. It is found in the chloroplast outer membrane. Functionally, voltage-dependent rectifying anion channel that facilitates the translocation between chloroplast and cytoplasm of phosphorylated carbohydrates such as triosephosphate, 3-phosphoglycerate and inorganic phosphate (Pi) depending of ATP to triosephosphate ratio in the plastidial intermembrane space; in high triosephosphate/ATP conditions (e.g. photosynthesis), export of triosphosphate from chloroplast (outward rectifying channels), but in high ATP/triosephosphate conditions (e.g. dark phase), import of phosphosolutes (inward rectifying channels). The protein is Outer envelope pore protein 21, chloroplastic (OEP21) of Oryza sativa subsp. indica (Rice).